The chain runs to 292 residues: Pyruvate formate-lyase 2-activating enzyme (292 aa).

The region spanning 33 to 287 is the Radical SAM core domain; that stretch reads NDGEGIRTVV…REMAERAGLQ (255 aa). Residues cysteine 47, cysteine 51, and cysteine 54 each coordinate [4Fe-4S] cluster. 53–55 provides a ligand contact to S-adenosyl-L-methionine; that stretch reads WCA. The region spanning 62-96 is the 4Fe-4S ferredoxin-type domain; it reads GKIQTVRREAKCLHCAKCLRDADECPSGAFERIGR. S-adenosyl-L-methionine is bound by residues glycine 126, 175-177, and histidine 247; that span reads DLK.

The protein belongs to the organic radical-activating enzymes family. It depends on [4Fe-4S] cluster as a cofactor.

Its subcellular location is the cytoplasm. It carries out the reaction glycyl-[formate C-acetyltransferase] + reduced [flavodoxin] + S-adenosyl-L-methionine = glycin-2-yl radical-[formate C-acetyltransferase] + semiquinone [flavodoxin] + 5'-deoxyadenosine + L-methionine + H(+). In terms of biological role, activation of pyruvate formate-lyase 2 under anaerobic conditions by generation of an organic free radical, using S-adenosylmethionine and reduced flavodoxin as cosubstrates to produce 5'-deoxy-adenosine. This is Pyruvate formate-lyase 2-activating enzyme (pflC) from Escherichia coli (strain K12).